A 130-amino-acid chain; its full sequence is Biotin carboxyl carrier protein (130 aa).

The segment at 20–64 is disordered; sequence EISESSVPAATPITPTTENTRAASDQKQQSQTPSPAATASAANTM. Polar residues predominate over residues 23-46; it reads ESSVPAATPITPTTENTRAASDQK. Over residues 47–64 the composition is skewed to low complexity; sequence QQSQTPSPAATASAANTM. A Biotinyl-binding domain is found at 55 to 130; that stretch reads AATASAANTM…NAGDNLITIA (76 aa). Residue K96 is modified to N6-biotinyllysine.

This Streptococcus mutans serotype c (strain ATCC 700610 / UA159) protein is Biotin carboxyl carrier protein (bcc).